The sequence spans 443 residues: Xaa-Pro dipeptidase (443 aa).

Mn(2+) contacts are provided by Asp-246, Asp-257, His-339, Glu-384, and Glu-423.

It belongs to the peptidase M24B family. Bacterial-type prolidase subfamily. Requires Mn(2+) as cofactor.

It carries out the reaction Xaa-L-Pro dipeptide + H2O = an L-alpha-amino acid + L-proline. Functionally, splits dipeptides with a prolyl residue in the C-terminal position. This is Xaa-Pro dipeptidase from Pectobacterium atrosepticum (strain SCRI 1043 / ATCC BAA-672) (Erwinia carotovora subsp. atroseptica).